The following is a 330-amino-acid chain: Short chain dehydrogenase yanD (330 aa).

Residues Lys-57, Asp-86, Asn-113, Tyr-204, and Lys-208 each coordinate NADP(+). The active-site Proton donor is the Tyr-204. Lys-208 acts as the Lowers pKa of active site Tyr in catalysis.

Belongs to the short-chain dehydrogenases/reductases (SDR) family.

The protein operates within secondary metabolite biosynthesis; terpenoid biosynthesis. In terms of biological role, short chain dehydrogenase; part of the gene cluster that mediates the biosynthesis of yanuthone D, a fungal isoprenoid epoxycyclohexenone that acts as an antibiotic against fungi and bacteria. The first step of the pathway is the synthesis of 6-methylsalicylic acid (6-MSA) by the polyketide synthase yanA. 6-MSA is then converted to m-cresol by the decarboxylase yanB. The cytochrome P450 monooxygenase yanC then catalyzes the oxidation of m-cresol to toluquinol. Epoxidation of toluquinol is then performed by the short chain dehydrogenase yanD, with the help of yanE, and a further prenylation by yanG leads to 7-deacetoxyyanuthone A. The next step is the hydroxylation of C-22 of 7-deacetoxyyanuthone A by the cytochrome P450 monooxygenase yanH to yield 22-deacetylyanuthone A. O-Mevalon transferase yanI then attaches mevalon to the hydroxyl group of 22-deacetylyanuthone A to produce yanuthone E. Finally, the FAD-dependent monooxygenase yanF oxidizes the hydroxyl group at C15 of yanuthone E to form yanuthone D. Furthermore, several branching points in the pathway lead to the production of yanuthones F and G from 7-deacetoxyyanuthone A; yanuthones H and I from 22-deacetylyanuthone A; and yanuthone J from yanuthone E. YanD is also involved in the synthesis of yanuthone X1 which does not have 6-methylsalicylic acid (6-MSA) as precursor. This Aspergillus niger (strain ATCC 1015 / CBS 113.46 / FGSC A1144 / LSHB Ac4 / NCTC 3858a / NRRL 328 / USDA 3528.7) protein is Short chain dehydrogenase yanD.